Consider the following 950-residue polypeptide: MLFSWREDPGAQCLLLSLLLLAASEVGSGQLHYSVSEEAKHGTFVGRIAQDLGLELAELVPRLFRVASKRHGDLLEVNLQNGILFVNSRIDREELCGRSAECSIHLEVIVDRPLQVFHVEVEVKDINDNAPVFPMSVKNLFISESRQPGSRFSLEGASDADIGTNSLLTYSLDSTEYFTLDVKRNDEEIKSLGLVLKKYLNREDTPKHYLLITAIDGGKPELTGTTQLKITVLDVNDNAPAFERTIYKVRLLENAPNGTLVVTVNATDLDEGVNKDIAYSFNTDMSADILSKFHLDPVNGQISVKGNIDFEESKSYEIQVEATDKGNPPMSDHCTVLLEIVDINDNVPELVIHSLSLPVLEDSPLSTVIALISVSDRDSGVNGQVTCSLTPHVPFKLVSTFKNYYSLVLDSPLDRESVSAYELVVTARDGGSPSLWATASVSVEVADVNDNAPAFSQSEYTVFVKENNPPGCHIFTVSARDADAQENALVSYSLVERRVGDRALSSYVSVHAESGKVYALQPLDHEELELLQFQVSARDAGVPPLGSNVTLQVFVLDENDNAPALLMPRVGGIGGAVSELVPRSVGAGHVVAKVRAVDADSGYNAWLXYELQPGTGGARIPFRVGLYTGEISTTRALDEVDVPRHRLLVLVKDHGEPSLTATATVLVSLVESGQAPKASSQASAGATGPEAALVDVNVYLIVAICAVSSLLVLTLLLYTALRCSAPPTEGACGPGKPTLVCSSAVGSWSYSQQRQQRVCSGEGLPKTDLMAFSPSLPPCPISRDREEKQDVDVDLSAKPRQPNPDWRYSASLRAGMHSSVHLEEAGILRAGPGGPDQQWPTVSSATPEPEAGEVSPPVGAGVNSNSWTFKYGPGNPKQSGPGELPDKFIIPGSPAIISIRQEPANSQIDKSDFITFGKKEETKKKKKKKKGNKTQEKKEKGNSTTDNSDQ.

The first 29 residues, 1–29, serve as a signal peptide directing secretion; the sequence is MLFSWREDPGAQCLLLSLLLLAASEVGSG. 6 consecutive Cadherin domains span residues 30–133, 134–242, 243–350, 351–455, 456–565, and 581–678; these read QLHY…APVF, PMSV…APAF, ERTI…VPEL, VIHS…APAF, SQSE…APAL, and VPRS…APKA. Over 30-697 the chain is Extracellular; it reads QLHYSVSEEA…GPEAALVDVN (668 aa). Asn-257 and Asn-265 each carry an N-linked (GlcNAc...) asparagine glycan. A glycan (N-linked (GlcNAc...) asparagine) is linked at Asn-548. A helical membrane pass occupies residues 698–718; it reads VYLIVAICAVSSLLVLTLLLY. At 719-950 the chain is on the cytoplasmic side; it reads TALRCSAPPT…GNSTTDNSDQ (232 aa). 2 PXXP repeats span residues 734–737 and 774–777; these read PGKP and PSLP. The tract at residues 734–894 is 6 X 4 AA repeats of P-X-X-P; it reads PGKPTLVCSS…PDKFIIPGSP (161 aa). Disordered stretches follow at residues 777 to 806, 831 to 856, and 869 to 889; these read PPCP…NPDW, GPGG…EVSP, and FKYG…DKFI. A compositionally biased stretch (basic and acidic residues) spans 782-797; sequence SRDREEKQDVDVDLSA. PXXP repeat units follow at residues 799–802, 832–835, 873–876, and 891–894; these read PRQP, PGGP, PGNP, and PGSP. The disordered stretch occupies residues 901–950; the sequence is QEPANSQIDKSDFITFGKKEETKKKKKKKKGNKTQEKKEKGNSTTDNSDQ. Positions 909-923 are enriched in basic and acidic residues; sequence DKSDFITFGKKEETK.

It localises to the cell membrane. In terms of biological role, potential calcium-dependent cell-adhesion protein. May be involved in the establishment and maintenance of specific neuronal connections in the brain. This chain is Protocadherin alpha-3 (PCDHA3), found in Pan troglodytes (Chimpanzee).